Here is a 322-residue protein sequence, read N- to C-terminus: Aldo-keto reductase family 1 member C13 (322 aa).

Residues Gly20–Tyr24 and Asp50 each bind NAD(+). Tyr55 acts as the Proton donor in catalysis. His117 provides a ligand contact to substrate. NAD(+)-binding positions include Ser166–Asn167, Gln190, Phe216–Tyr224, and Gln270–Asn280.

It belongs to the aldo/keto reductase family. In terms of assembly, monomer. Post-translationally, the N-terminus is blocked.

The catalysed reaction is morphine + NAD(+) = morphinone + NADH + H(+). It carries out the reaction morphine + NADP(+) = morphinone + NADPH + H(+). Its activity is regulated as follows. Strongly inhibited by sulfhydryl reagents and ketamine, but not by pyrazole, barbital and indomethacine. In terms of biological role, catalyzes the dehydrogenation of morphine to morphinone. The enzyme also exhibits significant activity for a variety of cyclic and alicyclic alcohols. In addition to xenobiotics, the enzyme catalyzes the dehydrogenation of 17-beta-hydroxysteroids with much higher affinities than morphine. Uses both NAD and NADP, but the activity is much greater with NAD than with NADP. In Mesocricetus auratus (Golden hamster), this protein is Aldo-keto reductase family 1 member C13 (AKR1C13).